A 450-amino-acid polypeptide reads, in one-letter code: Glucose-6-phosphate isomerase (450 aa).

Threonine 39 is subject to Phosphothreonine. Glutamate 291 functions as the Proton donor in the catalytic mechanism. Active-site residues include histidine 312 and lysine 426.

Belongs to the GPI family.

Its subcellular location is the cytoplasm. It catalyses the reaction alpha-D-glucose 6-phosphate = beta-D-fructose 6-phosphate. It participates in carbohydrate biosynthesis; gluconeogenesis. The protein operates within carbohydrate degradation; glycolysis; D-glyceraldehyde 3-phosphate and glycerone phosphate from D-glucose: step 2/4. Functionally, catalyzes the reversible isomerization of glucose-6-phosphate to fructose-6-phosphate. This chain is Glucose-6-phosphate isomerase, found in Bacillus cereus (strain AH187).